The primary structure comprises 342 residues: Phosphoribosylformylglycinamidine cyclo-ligase (342 aa).

It belongs to the AIR synthase family.

It localises to the cytoplasm. It carries out the reaction 2-formamido-N(1)-(5-O-phospho-beta-D-ribosyl)acetamidine + ATP = 5-amino-1-(5-phospho-beta-D-ribosyl)imidazole + ADP + phosphate + H(+). It participates in purine metabolism; IMP biosynthesis via de novo pathway; 5-amino-1-(5-phospho-D-ribosyl)imidazole from N(2)-formyl-N(1)-(5-phospho-D-ribosyl)glycinamide: step 2/2. The polypeptide is Phosphoribosylformylglycinamidine cyclo-ligase (Staphylococcus aureus (strain USA300)).